Consider the following 872-residue polypeptide: Leucine-rich repeat-containing protein 66 (872 aa).

A helical membrane pass occupies residues 4–24 (FYVRVTILVTGLCFVETVTTP). Asparagine 45 and asparagine 108 each carry an N-linked (GlcNAc...) asparagine glycan. LRR repeat units follow at residues 142–164 (RLQV…WKLK), 165–186 (SLRS…DFHG), 189–210 (QLES…AFKG), 213–234 (KLQV…VTIA), and 239–259 (HLEL…VNFQ). The tract at residues 339 to 363 (LRGMWPQSPVELRDSQDEQVTDRKD) is disordered. Over residues 349–363 (ELRDSQDEQVTDRKD) the composition is skewed to basic and acidic residues. Residues 371–391 (LAICLSVFITFVVAFCLGAFA) form a helical membrane-spanning segment. Positions 467 to 483 (QMLGSNGTDPGHQQSPE) are enriched in polar residues. 4 disordered regions span residues 467 to 501 (QMLG…VLPS), 560 to 579 (GTFP…SQPR), 695 to 761 (NYES…SQRI), and 776 to 872 (LISG…SKHW). Asparagine 472 carries an N-linked (GlcNAc...) asparagine glycan. Basic and acidic residues predominate over residues 484–493 (QLKDSNESRS). Position 718 is a phosphoserine (serine 718). Composition is skewed to polar residues over residues 725-736 (SVENDGTSQPLP), 746-760 (SVTS…TSQR), and 785-805 (CETN…STWP). Serine 752 is modified (phosphoserine). The segment covering 831–841 (VDWHYSLRDLE) has biased composition (basic and acidic residues).

Its subcellular location is the membrane. This Mus musculus (Mouse) protein is Leucine-rich repeat-containing protein 66 (Lrrc66).